The following is a 510-amino-acid chain: 2,3-bisphosphoglycerate-independent phosphoglycerate mutase (510 aa).

Mn(2+) is bound by residues D12 and S62. Catalysis depends on S62, which acts as the Phosphoserine intermediate. Residues H123, 153–154, R185, R191, 261–264, and K336 each bind substrate; these read RD and RPDR. The Mn(2+) site is built by D403, H407, D444, H445, and H462.

It belongs to the BPG-independent phosphoglycerate mutase family. As to quaternary structure, monomer. It depends on Mn(2+) as a cofactor.

The enzyme catalyses (2R)-2-phosphoglycerate = (2R)-3-phosphoglycerate. The protein operates within carbohydrate degradation; glycolysis; pyruvate from D-glyceraldehyde 3-phosphate: step 3/5. Its function is as follows. Essential for rapid growth and for sporulation. Catalyzes the interconversion of 2-phosphoglycerate and 3-phosphoglycerate. The chain is 2,3-bisphosphoglycerate-independent phosphoglycerate mutase from Priestia megaterium (strain DSM 319 / IMG 1521) (Bacillus megaterium).